Consider the following 102-residue polypeptide: CRISPR-associated endoribonuclease Cas2 (102 aa).

A Mg(2+)-binding site is contributed by Asp-8.

This sequence belongs to the CRISPR-associated endoribonuclease Cas2 protein family. As to quaternary structure, homodimer, forms a heterotetramer with a Cas1 homodimer. The cofactor is Mg(2+).

In terms of biological role, CRISPR (clustered regularly interspaced short palindromic repeat), is an adaptive immune system that provides protection against mobile genetic elements (viruses, transposable elements and conjugative plasmids). CRISPR clusters contain sequences complementary to antecedent mobile elements and target invading nucleic acids. CRISPR clusters are transcribed and processed into CRISPR RNA (crRNA). Functions as a ssRNA-specific endoribonuclease. Involved in the integration of spacer DNA into the CRISPR cassette. The sequence is that of CRISPR-associated endoribonuclease Cas2 from Acidovorax ebreus (strain TPSY) (Diaphorobacter sp. (strain TPSY)).